Reading from the N-terminus, the 705-residue chain is Polyribonucleotide nucleotidyltransferase (705 aa).

D487 and D493 together coordinate Mg(2+). Residues 554 to 613 (PKILTMAIEPDKIRDVIGPSGKQINQIIDETGVKIDIEQDGSIFISSTDNEMNKKAKQII) enclose the KH domain. An S1 motif domain is found at 623–691 (GQIYLGKVKR…RQGRVNLSRK (69 aa)).

The protein belongs to the polyribonucleotide nucleotidyltransferase family. Requires Mg(2+) as cofactor.

It localises to the cytoplasm. The catalysed reaction is RNA(n+1) + phosphate = RNA(n) + a ribonucleoside 5'-diphosphate. In terms of biological role, involved in mRNA degradation. Catalyzes the phosphorolysis of single-stranded polyribonucleotides processively in the 3'- to 5'-direction. The polypeptide is Polyribonucleotide nucleotidyltransferase (Oceanobacillus iheyensis (strain DSM 14371 / CIP 107618 / JCM 11309 / KCTC 3954 / HTE831)).